Here is a 197-residue protein sequence, read N- to C-terminus: 7-methyl-GTP pyrophosphatase (197 aa).

Asp73 (proton acceptor) is an active-site residue.

This sequence belongs to the Maf family. YceF subfamily. A divalent metal cation serves as cofactor.

Its subcellular location is the cytoplasm. It catalyses the reaction N(7)-methyl-GTP + H2O = N(7)-methyl-GMP + diphosphate + H(+). Functionally, nucleoside triphosphate pyrophosphatase that hydrolyzes 7-methyl-GTP (m(7)GTP). May have a dual role in cell division arrest and in preventing the incorporation of modified nucleotides into cellular nucleic acids. This is 7-methyl-GTP pyrophosphatase from Alcanivorax borkumensis (strain ATCC 700651 / DSM 11573 / NCIMB 13689 / SK2).